Here is a 177-residue protein sequence, read N- to C-terminus: Large ribosomal subunit protein uL6 (177 aa).

It belongs to the universal ribosomal protein uL6 family. As to quaternary structure, part of the 50S ribosomal subunit.

In terms of biological role, this protein binds to the 23S rRNA, and is important in its secondary structure. It is located near the subunit interface in the base of the L7/L12 stalk, and near the tRNA binding site of the peptidyltransferase center. The sequence is that of Large ribosomal subunit protein uL6 from Cellvibrio japonicus (strain Ueda107) (Pseudomonas fluorescens subsp. cellulosa).